Here is a 217-residue protein sequence, read N- to C-terminus: uncharacterized protein (217 aa).

The protein to M.tuberculosis Rv2926c.

This is an uncharacterized protein from Mycobacterium leprae (strain TN).